The following is a 142-amino-acid chain: uncharacterized protein (142 aa).

A compositionally biased stretch (basic residues) spans 1-14 (MKNVSPRRNKHYKS). Positions 1-40 (MKNVSPRRNKHYKSYKPQVPLKKPVLLPQHPPYRNRRKKK) are disordered. Residues 16–28 (KPQVPLKKPVLLP) show a composition bias toward low complexity.

This is an uncharacterized protein from Aquifex aeolicus (strain VF5).